The following is a 212-amino-acid chain: dTTP/UTP pyrophosphatase (212 aa).

The active-site Proton acceptor is Asp-88.

The protein belongs to the Maf family. YhdE subfamily. A divalent metal cation is required as a cofactor.

Its subcellular location is the cytoplasm. It carries out the reaction dTTP + H2O = dTMP + diphosphate + H(+). The catalysed reaction is UTP + H2O = UMP + diphosphate + H(+). Functionally, nucleoside triphosphate pyrophosphatase that hydrolyzes dTTP and UTP. May have a dual role in cell division arrest and in preventing the incorporation of modified nucleotides into cellular nucleic acids. The sequence is that of dTTP/UTP pyrophosphatase from Colwellia psychrerythraea (strain 34H / ATCC BAA-681) (Vibrio psychroerythus).